The sequence spans 159 residues: Large ribosomal subunit protein uL11 (159 aa).

This sequence belongs to the universal ribosomal protein uL11 family. In terms of assembly, part of the ribosomal stalk of the 50S ribosomal subunit. Interacts with L10 and the large rRNA to form the base of the stalk. L10 forms an elongated spine to which L12 dimers bind in a sequential fashion forming a multimeric L10(L12)X complex.

In terms of biological role, forms part of the ribosomal stalk which helps the ribosome interact with GTP-bound translation factors. The protein is Large ribosomal subunit protein uL11 of Nitrosopumilus maritimus (strain SCM1).